A 149-amino-acid polypeptide reads, in one-letter code: Calmodulin (149 aa).

Alanine 2 carries the post-translational modification N-acetylalanine. EF-hand domains are found at residues 8 to 43 (EQIA…VGQN), 44 to 79 (PTEA…KMKD), 81 to 116 (DSEE…LGEK), and 117 to 149 (LTDE…MMSK). Positions 21, 23, 25, 27, 32, 57, 59, 61, 63, 68, 94, 96, 98, 105, 130, 132, 134, 136, and 141 each coordinate Ca(2+).

The protein belongs to the calmodulin family.

Functionally, calmodulin mediates the control of a large number of enzymes, ion channels and other proteins by Ca(2+). Among the enzymes to be stimulated by the calmodulin-Ca(2+) complex are a number of protein kinases and phosphatases. The chain is Calmodulin (CMD1) from Achlya klebsiana.